A 211-amino-acid chain; its full sequence is Ras-related protein Rab-38 (211 aa).

GTP-binding residues include Gly-19, Val-20, Gly-21, Lys-22, Thr-23, Ser-24, Ser-35, Ser-36, Tyr-38, and Thr-41. A Mg(2+)-binding site is contributed by Thr-23. Residues 32–46 (QNFSSHYRATIGVDF) carry the Switch 1 motif. Mg(2+) contacts are provided by Thr-41 and Asp-65. GTP contacts are provided by Gly-68, Lys-128, Asp-130, Ala-160, and Lys-161. A Switch 2 motif is present at residues 68–81 (GQERFGNMTRVYYR). A lipid anchor (S-palmitoyl cysteine) is attached at Cys-205. Residue Cys-208 is the site of S-geranylgeranyl cysteine attachment.

The protein belongs to the small GTPase superfamily. Rab family. As to quaternary structure, interacts with ANKRD27. Mg(2+) serves as cofactor.

It localises to the cell membrane. The protein localises to the cytoplasmic vesicle. It is found in the phagosome. The protein resides in the phagosome membrane. Its subcellular location is the melanosome. It localises to the melanosome membrane. The enzyme catalyses GTP + H2O = GDP + phosphate + H(+). Its activity is regulated as follows. Regulated by guanine nucleotide exchange factors (GEFs) including the BLOC-3 complex composed of HPS1 and HPS4 which promote the exchange of bound GDP for free GTP. Regulated by GTPase activating proteins (GAPs) including SGSM2 which increase the GTP hydrolysis activity. Inhibited by GDP dissociation inhibitors (GDIs). Its function is as follows. The small GTPases Rab are key regulators of intracellular membrane trafficking, from the formation of transport vesicles to their fusion with membranes. Rabs cycle between an inactive GDP-bound form and an active GTP-bound form that is able to recruit to membranes different sets of downstream effectors directly responsible for vesicle formation, movement, tethering and fusion. RAB38 plays a role in the maturation of phagosomes that engulf pathogens, such as S.aureus and Mycobacterium. May be involved in melanosomal transport and docking. Involved in the proper sorting of TYRP1. Involved in peripheral melanosomal distribution of TYRP1 in melanocytes; the function, which probably is implicating vesicle-trafficking, includes cooperation with ANKRD27 and VAMP7. Plays an important role in the control of melanin production and melanosome biogenesis. In concert with RAB32, regulates the proper trafficking of melanogenic enzymes TYR, TYRP1 and DCT/TYRP2 to melanosomes in melanocytes. This Mus musculus (Mouse) protein is Ras-related protein Rab-38.